The chain runs to 97 residues: Citrate lyase acyl carrier protein (97 aa).

Ser-14 is subject to O-(phosphoribosyl dephospho-coenzyme A)serine.

Belongs to the CitD family. As to quaternary structure, oligomer with a subunit composition of (alpha,beta,gamma)6.

The protein localises to the cytoplasm. In terms of biological role, covalent carrier of the coenzyme of citrate lyase. This Cronobacter sakazakii (strain ATCC BAA-894) (Enterobacter sakazakii) protein is Citrate lyase acyl carrier protein.